The following is a 78-amino-acid chain: High temperature lethal protein 1 (78 aa).

Residue Ser-2 is modified to N-acetylserine.

As to quaternary structure, interacts directly with RSC8. Component of the two forms of the RSC complex composed of at least either RSC1 or RSC2, and ARP7, ARP9, LDB7, NPL6, RSC3, RSC30, RSC4, RSC58, RSC6, RSC8, RSC9, SFH1, STH1, HTL1 and probably RTT102. The complexes interact with histone and histone variant components of centromeric chromatin. Component of a fungal-specific module (HTL1-LDB7-NPL6-RSC3-RSC30) within the RSC complex.

It localises to the nucleus. Its function is as follows. Required for cell cycle progression through G2/M transition at temperatures higher than 33 degrees Celsius. Component of the chromatin structure-remodeling complex (RSC), which is involved in transcription regulation and nucleosome positioning. RSC is responsible for the transfer of a histone octamer from a nucleosome core particle to naked DNA. The reaction requires ATP and involves an activated RSC-nucleosome intermediate. Remodeling reaction also involves DNA translocation, DNA twist and conformational change. As a reconfigurer of centromeric and flanking nucleosomes, RSC complex is required both for proper kinetochore function in chromosome segregation and, via a PKC1-dependent signaling pathway, for organization of the cellular cytoskeleton. When associated with the RSC complex, may act coordinately with PKC1 to regulate G2/M transition. Together with LDB7, NPL6, RSC3, RSC30 components, defines a fungal-specific module within the RSC complex that plays a role in many cellular functions including the maintenance of cell wall integrity. The protein is High temperature lethal protein 1 (HTL1) of Saccharomyces cerevisiae (strain ATCC 204508 / S288c) (Baker's yeast).